The primary structure comprises 542 residues: MLO-like protein 7 (542 aa).

Residues 1-38 (MITRSRCRRSLLWFLVFHGGATATGAPSGGKELSQTPT) lie on the Extracellular side of the membrane. The helical transmembrane segment at 39-59 (WAVAVVCTFLILISHLLEKGL) threads the bilayer. Residues 60–82 (QRLANWLWKKHKNSLLEALEKIK) lie on the Cytoplasmic side of the membrane. A helical membrane pass occupies residues 83 to 103 (AELMILGFISLLLTFGEPYIL). Residues 104 to 165 (KICVPRKAAL…ITLKGLHQLH (62 aa)) are Extracellular-facing. The chain crosses the membrane as a helical span at residues 166–186 (ILLFFLAIFHIVYSLITMMLS). At 187–288 (RLKIRGWKKW…IKRSLEDDFK (102 aa)) the chain is on the cytoplasmic side. Residues 289 to 309 (LVVGISPVLWASFVIFLLFNV) traverse the membrane as a helical segment. Residues 310 to 315 (NGWRTL) are Extracellular-facing. The helical transmembrane segment at 316–336 (FWASIPPLLIILAVGTKLQAI) threads the bilayer. Over 337–374 (MATMALEIVETHAVVQGMPLVQGSDRYFWFDCPQLLLH) the chain is Cytoplasmic. Residues 375–395 (LIHFALFQNAFQITHFFWIWY) traverse the membrane as a helical segment. At 396-414 (SFGLKSCFHKDFNLVVSKL) the chain is on the extracellular side. A helical membrane pass occupies residues 415-435 (FLCLGALILCSYITLPLYALV). Residues 436–542 (TQMGSHMKKA…QQQEMQFHNS (107 aa)) lie on the Cytoplasmic side of the membrane. The interval 449-470 (EQMAKALKKWHKDIKLKKGKAR) is calmodulin-binding.

This sequence belongs to the MLO family. Restricted to pollen, synergids, pistils and immature anthers. Also detected in seedlings, leaves, stems and inflorescens.

It is found in the cell membrane. The protein localises to the endomembrane system. May be involved in modulation of pathogen defense and leaf cell death. Activity seems to be regulated by Ca(2+)-dependent calmodulin binding and seems not to require heterotrimeric G proteins. Controls pollen tube reception in the female gametophyte synergids. The sequence is that of MLO-like protein 7 (MLO7) from Arabidopsis thaliana (Mouse-ear cress).